The following is a 497-amino-acid chain: tRNA-2-methylthio-N(6)-dimethylallyladenosine synthase (497 aa).

Residues Met-1 to Leu-50 form a disordered region. The MTTase N-terminal domain occupies Gly-48–Glu-165. Positions 57, 94, 128, 202, 206, and 209 each coordinate [4Fe-4S] cluster. The Radical SAM core domain occupies Arg-188 to Asp-430. The 64-residue stretch at Lys-433–Thr-496 folds into the TRAM domain.

Belongs to the methylthiotransferase family. MiaB subfamily. Monomer. Requires [4Fe-4S] cluster as cofactor.

It is found in the cytoplasm. It carries out the reaction N(6)-dimethylallyladenosine(37) in tRNA + (sulfur carrier)-SH + AH2 + 2 S-adenosyl-L-methionine = 2-methylsulfanyl-N(6)-dimethylallyladenosine(37) in tRNA + (sulfur carrier)-H + 5'-deoxyadenosine + L-methionine + A + S-adenosyl-L-homocysteine + 2 H(+). Catalyzes the methylthiolation of N6-(dimethylallyl)adenosine (i(6)A), leading to the formation of 2-methylthio-N6-(dimethylallyl)adenosine (ms(2)i(6)A) at position 37 in tRNAs that read codons beginning with uridine. This is tRNA-2-methylthio-N(6)-dimethylallyladenosine synthase from Xylella fastidiosa (strain 9a5c).